Consider the following 107-residue polypeptide: Ig kappa chain V-VI region NQ2-17.4.1 (107 aa).

The framework-1 stretch occupies residues 1–23 (QIVLTQSPAIMSASPGQKVTMTC). The cysteines at positions 23 and 87 are disulfide-linked. A complementarity-determining-1 region spans residues 24 to 33 (SASSSVSYMH). Positions 34–48 (WYQQKSGTSPKRWIY) are framework-2. The complementarity-determining-2 stretch occupies residues 49–55 (DTSKLAS). A framework-3 region spans residues 56–87 (GVPARFSGSGSATSYSLTITSMQAEDAATYYC). Residues 88–96 (QQWSSNPLT) are complementarity-determining-3. The framework-4 stretch occupies residues 97-106 (FGAGTKLELK).

Functionally, anti-2-phenyl oxazolone (PHOX) Antibody. The sequence is that of Ig kappa chain V-VI region NQ2-17.4.1 from Mus musculus (Mouse).